The sequence spans 124 residues: Mitochondrial import inner membrane translocase subunit TIM16 (124 aa).

Positions 58 to 109 (EAQQILNISKLSPEEVQNYEHLFKVNDKSVGDSFYLQSKVVRAKERLDEELQ) are J-like. Residue Ser69 is modified to Phosphoserine.

The protein belongs to the TIM16/PAM16 family. Probable component of the PAM complex at least composed of a mitochondrial HSP70 protein, GRPEL1 or GRPEL2, TIMM44, TIMM16/PAM16 and TIMM14/DNAJC19. Interacts with DNAJC19. Directly interacts with DNAJC15; this interaction counteracts DNAJC15-dependent stimulation of HSPA9 ATPase activity. Associates with the TIM23 complex.

It localises to the mitochondrion inner membrane. In terms of biological role, regulates ATP-dependent protein translocation into the mitochondrial matrix. Inhibits DNAJC19 stimulation of HSPA9/Mortalin ATPase activity. The sequence is that of Mitochondrial import inner membrane translocase subunit TIM16 (Magmas-ps1) from Rattus norvegicus (Rat).